A 511-amino-acid chain; its full sequence is Bifunctional purine biosynthesis protein PurH (511 aa).

In terms of domain architecture, MGS-like spans 1–145; sequence MKRRAIISVS…KNHAYVTAVV (145 aa).

Belongs to the PurH family.

The enzyme catalyses (6R)-10-formyltetrahydrofolate + 5-amino-1-(5-phospho-beta-D-ribosyl)imidazole-4-carboxamide = 5-formamido-1-(5-phospho-D-ribosyl)imidazole-4-carboxamide + (6S)-5,6,7,8-tetrahydrofolate. It catalyses the reaction IMP + H2O = 5-formamido-1-(5-phospho-D-ribosyl)imidazole-4-carboxamide. It functions in the pathway purine metabolism; IMP biosynthesis via de novo pathway; 5-formamido-1-(5-phospho-D-ribosyl)imidazole-4-carboxamide from 5-amino-1-(5-phospho-D-ribosyl)imidazole-4-carboxamide (10-formyl THF route): step 1/1. The protein operates within purine metabolism; IMP biosynthesis via de novo pathway; IMP from 5-formamido-1-(5-phospho-D-ribosyl)imidazole-4-carboxamide: step 1/1. This is Bifunctional purine biosynthesis protein PurH from Anoxybacillus flavithermus (strain DSM 21510 / WK1).